Reading from the N-terminus, the 601-residue chain is MCGIVGYIGYDNAKELLLKGLEKLEYRGYDSAGIAVVNDDNTTVFKEKGRIAELRKVADSSDFDGPVGIGHTRWATHGVPNHENSHPHQSSNGRFTLVHNGVIENYEELKGEYLQGVSFISETDTEVIVQLVEYFSNQGLSTEEAFTKVVSLLHGSYALGLLDAEDKDTIYVAKNKSPLLLGVGEGFNVIASDALAMLQVTSEYKEIHDHEIVIVKKDEVIIKDADGNVVERDSYIAEIDASDAEKGVYAHYMLKEIHEQPAVMRRIIQEYQDAEGNLKIDQDIINDVKEADRIYVIAAGTSYHAGLVGKEFLEKWAGVPTEVHVASEFVYNMPLLSEKPLFVYISQSGETADSRAVLVETNKLGHKSLTITNVAGSTLSREADHTLLLHAGPEIAVASTKAYTAQIAVLSILSQIVAKEHGREADIDLLRELAKVTTAIEAIVDDAPIMEQIATDFLETTRNAFFIGRTIDYNVSLEGALKLKEISYIQAEGFAGGELKHGTIALIEDGTPVVALATQENVNLSIRGNVKEVVARGAHPCIISMEGLEKEGDTYVIPHVHELLTPLVSVVALQLISYYAALHRDLDVDKPRNLAKSVTVE.

The active-site Nucleophile; for GATase activity is the Cys-2. Residues 2-218 (CGIVGYIGYD…DHEIVIVKKD (217 aa)) enclose the Glutamine amidotransferase type-2 domain. SIS domains are found at residues 284-423 (IIND…EHGR) and 453-591 (IATD…VDKP). Residue Lys-596 is the For Fru-6P isomerization activity of the active site.

In terms of assembly, homodimer.

The protein localises to the cytoplasm. The enzyme catalyses D-fructose 6-phosphate + L-glutamine = D-glucosamine 6-phosphate + L-glutamate. Catalyzes the first step in hexosamine metabolism, converting fructose-6P into glucosamine-6P using glutamine as a nitrogen source. The polypeptide is Glutamine--fructose-6-phosphate aminotransferase [isomerizing] (Staphylococcus aureus (strain Mu50 / ATCC 700699)).